Consider the following 255-residue polypeptide: F-box/SPRY domain-containing protein 1 (255 aa).

The F-box domain occupies 3–51; it reads DPVAALCNFNVLEVIFSYLDLNDLSRCSQVCRSWHHFLNDENSDVWRWH. Residues 61 to 253 form the B30.2/SPRY domain; the sequence is MKSDLLTSVS…VSMVYLGTPL (193 aa).

This sequence belongs to the FBXO45/Fsn family. As to quaternary structure, component of an E3 ubiquitin ligase complex composed of hiw and Fsn.

The protein localises to the synapse. Its pathway is protein modification; protein ubiquitination. Required in the presynaptic motoneuron to down-regulate the levels of wnd and restrain synaptic terminal growth at the neuromuscular junction (NMJ). This Drosophila willistoni (Fruit fly) protein is F-box/SPRY domain-containing protein 1.